The sequence spans 943 residues: MDAGLSTMATRNGQSSARVKLRNNLLNNDIGNIDIRDETPISRNGNDSNINIQPSSVPQQQQQQQQYYRNGMNEAPIQAPLQQRQIPMQNYSQQQRQQQQYNFEYSNPHMNEIPLMQHNFTKPSLSNNRDNVNGKKASSFTQSSFSNFFKHKHQFGKSKKNTKGTGGGGDGDDDDEVILDDSANSDLTFNDIQTFGHKGGDKYGYGGDSTPIIPTLVTKDRGNMSNTEYRKYITNQRKTAMNAMAKQTKNGTLASLPPRAMSLQSFPNGNPLMQAPTPHPRFQPNKMVSANYSRSNSLMSGPPGQFRQPQQQRMLPMNNYNNHPGQFQNTPPVMPSGQQPPQQPRTLSLTNGPRYSPQNPRPFAGHQQISQRQQQQQQQLQLHPMSEGYRTMSLQSQNVPQGFNPWSPNDNDRKAVSMKQPISQSSISSKNNSAYSIPNVQNNSLTTFSPSSPTDATAMPNSTKQGSSPLKKQVNIDQPIENKGKLNVLQLSTPQQNELKEKERKLAEMEKSLREREALVEEKEKERAEKNTEANEEEEISHESDDLNLRPASALETGLKDLKLESESAVANRASLSTFSSTFSDSPSKQRIINTRTGMYKLENSTDINEYVTAQEFPSPGKYNSNSDNGEMNTTNEVDFDFNTSKRASLLQSIPERDPKRNVSDATIKRRESDGNGRRLSNVNISMNQENINNDTFLYKKNNRDGHLSAVSHMSSSSRRSFISNTLPLNIDSASESDNFVPHMDGSPSKTKSAPVSYDKDGMNASEEDFSFDNTLAKPYEPLYARRGDITSAGSTSGEDSSQPKMITISGEQLNLITENKELMNELTLVSTELAESIKRETELEERIRLYETNNSAPSFDDSSSVSFSDFEKELRKKSSKIVQLIQQLNDERLKRFIAEEQLLLQENGTKPSSMELVGRIENLNKLIDERDSEIEMLKGRLQ.

An N-acetylmethionine modification is found at M1. Disordered regions lie at residues 37–63 (DETP…QQQQ), 152–177 (KHQF…DDEV), 315–381 (LPMN…QQLQ), 397–472 (QNVP…PLKK), and 515–546 (EREA…ESDD). Over residues 41–58 (ISRNGNDSNINIQPSSVP) the composition is skewed to polar residues. Over residues 152–162 (KHQFGKSKKNT) the composition is skewed to basic residues. Positions 318–358 (NNYNNHPGQFQNTPPVMPSGQQPPQQPRTLSLTNGPRYSPQ) are enriched in polar residues. Over residues 367-381 (QQISQRQQQQQQQLQ) the composition is skewed to low complexity. Polar residues predominate over residues 397 to 409 (QNVPQGFNPWSPN). Positions 417–433 (SMKQPISQSSISSKNNS) are enriched in low complexity. Residues 434-470 (AYSIPNVQNNSLTTFSPSSPTDATAMPNSTKQGSSPL) are compositionally biased toward polar residues. Residues 515–533 (EREALVEEKEKERAEKNTE) show a composition bias toward basic and acidic residues. Phosphoserine is present on residues S553, S586, and S619. Residues 616–639 (EFPSPGKYNSNSDNGEMNTTNEVD) form a disordered region. The span at 622 to 639 (KYNSNSDNGEMNTTNEVD) shows a compositional bias: polar residues. A Phosphoserine modification is found at S649. The tract at residues 654-683 (IPERDPKRNVSDATIKRRESDGNGRRLSNV) is disordered. The segment covering 655-677 (PERDPKRNVSDATIKRRESDGNG) has biased composition (basic and acidic residues). S681, S766, and S771 each carry phosphoserine.

This is an uncharacterized protein from Saccharomyces cerevisiae (strain ATCC 204508 / S288c) (Baker's yeast).